A 203-amino-acid chain; its full sequence is Thymidylate kinase (203 aa).

10–17 (GTEGSGKS) is a binding site for ATP.

It belongs to the thymidylate kinase family.

The catalysed reaction is dTMP + ATP = dTDP + ADP. Functionally, phosphorylation of dTMP to form dTDP in both de novo and salvage pathways of dTTP synthesis. The sequence is that of Thymidylate kinase from Dichelobacter nodosus (strain VCS1703A).